A 63-amino-acid polypeptide reads, in one-letter code: Large ribosomal subunit protein bL35 (63 aa).

Composition is skewed to basic residues over residues 1–25 (MPKM…KHRQ) and 32–47 (LTKK…RPKK). The segment at 1–55 (MPKMKSKSSAAKRFKKTANGFKHRQSFTSHILTKKSTKRKRHLRPKKQVNPSDVP) is disordered.

Belongs to the bacterial ribosomal protein bL35 family.

The polypeptide is Large ribosomal subunit protein bL35 (Hahella chejuensis (strain KCTC 2396)).